Here is a 434-residue protein sequence, read N- to C-terminus: ATP-dependent protease ATPase subunit HslU (434 aa).

Residues Val-18, 60-65 (GVGKTE), Asp-247, Glu-312, and Arg-384 each bind ATP.

This sequence belongs to the ClpX chaperone family. HslU subfamily. In terms of assembly, a double ring-shaped homohexamer of HslV is capped on each side by a ring-shaped HslU homohexamer. The assembly of the HslU/HslV complex is dependent on binding of ATP.

The protein localises to the cytoplasm. Its function is as follows. ATPase subunit of a proteasome-like degradation complex; this subunit has chaperone activity. The binding of ATP and its subsequent hydrolysis by HslU are essential for unfolding of protein substrates subsequently hydrolyzed by HslV. HslU recognizes the N-terminal part of its protein substrates and unfolds these before they are guided to HslV for hydrolysis. The chain is ATP-dependent protease ATPase subunit HslU from Bradyrhizobium diazoefficiens (strain JCM 10833 / BCRC 13528 / IAM 13628 / NBRC 14792 / USDA 110).